We begin with the raw amino-acid sequence, 185 residues long: Mitochondrial inner membrane protease atp23 (185 aa).

An a divalent metal cation-binding site is contributed by His86. The active site involves Glu87. His90 lines the a divalent metal cation pocket.

Belongs to the peptidase M76 family.

It is found in the mitochondrion inner membrane. Has a dual role in the assembly of mitochondrial ATPase. Acts as a protease that removes N-terminal residues of mitochondrial ATPase CF(0) subunit 6 at the intermembrane space side. Also involved in the correct assembly of the membrane-embedded ATPase CF(0) particle, probably mediating association of subunit 6 with the subunit 9 ring. The protein is Mitochondrial inner membrane protease atp23 (atp23) of Schizosaccharomyces pombe (strain 972 / ATCC 24843) (Fission yeast).